The following is a 67-amino-acid chain: UPF0434 protein Bphy_0537 (67 aa).

This sequence belongs to the UPF0434 family.

This is UPF0434 protein Bphy_0537 from Paraburkholderia phymatum (strain DSM 17167 / CIP 108236 / LMG 21445 / STM815) (Burkholderia phymatum).